A 525-amino-acid polypeptide reads, in one-letter code: GMP synthase [glutamine-hydrolyzing] (525 aa).

Positions 9-207 (RILILDFGSQ…VLDVCQCEAL (199 aa)) constitute a Glutamine amidotransferase type-1 domain. Catalysis depends on C86, which acts as the Nucleophile. Active-site residues include H181 and E183. In terms of domain architecture, GMPS ATP-PPase spans 208–400 (WTPASIIEDT…LGLPYDMLNR (193 aa)). Residue 235–241 (SGGVDSS) participates in ATP binding.

Homodimer.

The catalysed reaction is XMP + L-glutamine + ATP + H2O = GMP + L-glutamate + AMP + diphosphate + 2 H(+). The protein operates within purine metabolism; GMP biosynthesis; GMP from XMP (L-Gln route): step 1/1. Catalyzes the synthesis of GMP from XMP. The chain is GMP synthase [glutamine-hydrolyzing] from Photorhabdus laumondii subsp. laumondii (strain DSM 15139 / CIP 105565 / TT01) (Photorhabdus luminescens subsp. laumondii).